The following is a 571-amino-acid chain: Germacrene B synthase TPS16CC (571 aa).

(2E,6E)-farnesyl diphosphate contacts are provided by R287, D324, D328, R465, and D468. Residues D324 and D328 each contribute to the Mg(2+) site. Residues 324–328 carry the DDXXD motif motif; that stretch reads DDIYD. Mg(2+) is bound by residues D468, S472, and E476.

Belongs to the terpene synthase family. Tpsb subfamily. It depends on Mg(2+) as a cofactor. Requires Mn(2+) as cofactor. As to expression, highly expressed in glandular trichomes.

It carries out the reaction (2E,6E)-farnesyl diphosphate = (1E,4E)-germacrene B + diphosphate. Its pathway is secondary metabolite biosynthesis; terpenoid biosynthesis. In terms of biological role, involved in sesquiterpene olefins biosynthesis, constituants of cannabinoids and terpenoids-rich resins. Catalyzes mainly the conversion of (2E)-farnesyl diphosphate to germacrene B, which is spontaneously converted to gamma-elemene as a thermal degradation product. The sequence is that of Germacrene B synthase TPS16CC from Cannabis sativa (Hemp).